A 178-amino-acid chain; its full sequence is Caveolin-1 (178 aa).

Ser2 carries the post-translational modification N-acetylserine. Residue Ser2 is modified to Phosphoserine. The tract at residues 2 to 94 (SGGKYVDSEG…WKASFTTFTV (93 aa)) is required for homooligomerization. At 2 to 104 (SGGKYVDSEG…TKYWFYRLLS (103 aa)) the chain is on the cytoplasmic side. Residue Lys5 is modified to N6-acetyllysine; alternate. Lys5 participates in a covalent cross-link: Glycyl lysine isopeptide (Lys-Gly) (interchain with G-Cter in ubiquitin); alternate. Phosphotyrosine is present on Tyr6. Residue Ser9 is modified to Phosphoserine. Position 14 is a phosphotyrosine; by ABL1 (Tyr14). The residue at position 25 (Tyr25) is a Phosphotyrosine. Residues Lys26 and Lys30 each participate in a glycyl lysine isopeptide (Lys-Gly) (interchain with G-Cter in ubiquitin) cross-link. Residue Ser37 is modified to Phosphoserine. Glycyl lysine isopeptide (Lys-Gly) (interchain with G-Cter in ubiquitin) cross-links involve residues Lys39, Lys47, and Lys57. Residues 82-94 (DGIWKASFTTFTV) are interaction with CAVIN3. An intramembrane region (helical) is located at residues 105–125 (ALFGIPMALVWGIYFAILSFL). The Cytoplasmic portion of the chain corresponds to 126 to 178 (HIWAVVPCIKSFLIEIQCISRVYSIYVHTVCDPLFEAVGKIFSNVRINLQKEI). Residues 131–142 (VPCIKSFLIEIQ) are interacts with SPRY1, SPRY2, SPRY3 and SPRY4. S-palmitoyl cysteine attachment occurs at residues Cys133, Cys143, and Cys156. Positions 149 to 160 (SIYVHTVCDPLF) are interacts with SPRY1, SPRY2, and SPRY4. Residues 167–178 (FSNVRINLQKEI) are interacts with SPRY1, SPRY2, SPRY3 and SPRY4.

The protein belongs to the caveolin family. Homooligomer. Interacts with GLIPR2. Interacts with NOSTRIN. Interacts with SNAP25 and STX1A. Interacts (via the N-terminus) with DPP4; the interaction is direct. Interacts with CTNNB1, CDH1 and JUP. Interacts with PACSIN2; this interaction induces membrane tubulation. Interacts with SLC7A9. Interacts with BMX and BTK. Interacts with TGFBR1. Interacts with CAVIN3 (via leucine-zipper domain) in a cholesterol-sensitive manner. Interacts with CAVIN1. Interacts with EHD2 in a cholesterol-dependent manner. Forms a ternary complex with UBXN6 and VCP; mediates CAV1 targeting to lysosomes for degradation. Interacts with ABCG1; this interaction regulates ABCG1-mediated cholesterol efflux. Interacts with NEU3; this interaction enhances NEU3 sialidase activity within caveola. Interacts (via C-terminus) with SPRY1, SPRY2 (via C-terminus), SPRY3, and SPRY4. Interacts with IGFBP5; this interaction allows trafficking of IGFBP5 from the plasma membrane to the nucleus. Phosphorylated at Tyr-14 by ABL1 in response to oxidative stress. In terms of processing, ubiquitinated. Undergo monoubiquitination and multi- and/or polyubiquitination. Monoubiquitination of N-terminal lysines promotes integration in a ternary complex with UBXN6 and VCP which promotes oligomeric CAV1 targeting to lysosomes for degradation. Ubiquitinated by ZNRF1; leading to degradation and modulation of the TLR4-mediated immune response.

The protein localises to the golgi apparatus membrane. Its subcellular location is the cell membrane. The protein resides in the membrane. It is found in the caveola. It localises to the membrane raft. Its function is as follows. May act as a scaffolding protein within caveolar membranes. Forms a stable heterooligomeric complex with CAV2 that targets to lipid rafts and drives caveolae formation. Mediates the recruitment of CAVIN proteins (CAVIN1/2/3/4) to the caveolae. Interacts directly with G-protein alpha subunits and can functionally regulate their activity. Involved in the costimulatory signal essential for T-cell receptor (TCR)-mediated T-cell activation. Its binding to DPP4 induces T-cell proliferation and NF-kappa-B activation in a T-cell receptor/CD3-dependent manner. Recruits CTNNB1 to caveolar membranes and may regulate CTNNB1-mediated signaling through the Wnt pathway. Negatively regulates TGFB1-mediated activation of SMAD2/3 by mediating the internalization of TGFBR1 from membrane rafts leading to its subsequent degradation. Binds 20(S)-hydroxycholesterol (20(S)-OHC). The polypeptide is Caveolin-1 (CAV1) (Papio anubis (Olive baboon)).